Consider the following 538-residue polypeptide: NAD(P)H-quinone oxidoreductase chain 4 (538 aa).

14 consecutive transmembrane segments (helical) span residues 11–31 (FPWLSLSIFFPIVGALIVPFI), 43–63 (YALIIALITFLITVAAYFKGF), 95–115 (MPLILLTSFITSLAVLAAWPV), 119–139 (PKLFFFLILAMDGGQIAVFAV), 143–163 (LLFFLAWELELFPVYLFLAIW), 175–195 (FIIYTAGSSLFILLAGLAMGF), 217–237 (GFQLLCYSGLLIAFGVKLPIV), 251–271 (TAPVHMLLAGILLKMGGYALL), 285–305 (FAPLLIVLGVVNIIYAALTSF), 314–334 (IAYSSISHMGFVLIGIGSFSS), 340–360 (AMLQMVSHGLIGASLFFLVGA), 382–404 (IMFALWTACAFASLALPGMSGFI), 425–445 (IVVASLAAIGVILTPIYLLSM), and 472–492 (IYIIACLLVPIIGIGLYPKIM).

The protein belongs to the complex I subunit 4 family.

It is found in the cellular thylakoid membrane. It carries out the reaction a plastoquinone + NADH + (n+1) H(+)(in) = a plastoquinol + NAD(+) + n H(+)(out). The enzyme catalyses a plastoquinone + NADPH + (n+1) H(+)(in) = a plastoquinol + NADP(+) + n H(+)(out). Its function is as follows. NDH-1 shuttles electrons from NAD(P)H, via FMN and iron-sulfur (Fe-S) centers, to quinones in the respiratory chain. The immediate electron acceptor for the enzyme in this species is believed to be plastoquinone. Couples the redox reaction to proton translocation (for every two electrons transferred, four hydrogen ions are translocated across the cytoplasmic membrane), and thus conserves the redox energy in a proton gradient. This chain is NAD(P)H-quinone oxidoreductase chain 4, found in Prochlorococcus marinus (strain NATL2A).